A 115-amino-acid polypeptide reads, in one-letter code: Large ribosomal subunit protein uL22 (115 aa).

This sequence belongs to the universal ribosomal protein uL22 family. In terms of assembly, part of the 50S ribosomal subunit.

This protein binds specifically to 23S rRNA; its binding is stimulated by other ribosomal proteins, e.g. L4, L17, and L20. It is important during the early stages of 50S assembly. It makes multiple contacts with different domains of the 23S rRNA in the assembled 50S subunit and ribosome. Functionally, the globular domain of the protein is located near the polypeptide exit tunnel on the outside of the subunit, while an extended beta-hairpin is found that lines the wall of the exit tunnel in the center of the 70S ribosome. In Coxiella burnetii (strain CbuG_Q212) (Coxiella burnetii (strain Q212)), this protein is Large ribosomal subunit protein uL22.